The primary structure comprises 308 residues: Protoheme IX farnesyltransferase (308 aa).

8 helical membrane-spanning segments follow: residues 31-51 (VIELLLVTAIPAMLLAQRGTV), 53-73 (PLLIVNTLIGGMLAAGGANAL), 102-122 (NALVFGLVLTAGSFLWLWWTT), 124-144 (LLSGLLALATIAFYVFIYTLL), 149-169 (TSQNVVWGGAAGCMPVMIGWS), 170-190 (AVTGTIQWPALVMFAIIFFWT), 240-260 (LALATGWLYAAVALVAGVWFL), and 288-308 (YLAVVFCALAIDSAIGLPHLF).

Belongs to the UbiA prenyltransferase family. Protoheme IX farnesyltransferase subfamily.

The protein localises to the cell membrane. The catalysed reaction is heme b + (2E,6E)-farnesyl diphosphate + H2O = Fe(II)-heme o + diphosphate. It functions in the pathway porphyrin-containing compound metabolism; heme O biosynthesis; heme O from protoheme: step 1/1. Functionally, converts heme B (protoheme IX) to heme O by substitution of the vinyl group on carbon 2 of heme B porphyrin ring with a hydroxyethyl farnesyl side group. This Mycolicibacterium paratuberculosis (strain ATCC BAA-968 / K-10) (Mycobacterium paratuberculosis) protein is Protoheme IX farnesyltransferase.